Reading from the N-terminus, the 30-residue chain is Cyclotide cter-H (30 aa).

Positions 1-30 form a cross-link, cyclopeptide (Gly-Asp); that stretch reads GLPCGESCVFIPCITTVVGCSCKNKVCYND. 3 disulfide bridges follow: Cys-4–Cys-20, Cys-8–Cys-22, and Cys-13–Cys-27.

Contains 3 disulfide bonds. Post-translationally, this is a cyclic peptide.

Probably participates in a plant defense mechanism. The sequence is that of Cyclotide cter-H from Clitoria ternatea (Butterfly pea).